The chain runs to 312 residues: Methionyl-tRNA formyltransferase (312 aa).

109–112 (SLLP) lines the (6S)-5,6,7,8-tetrahydrofolate pocket.

It belongs to the Fmt family.

It catalyses the reaction L-methionyl-tRNA(fMet) + (6R)-10-formyltetrahydrofolate = N-formyl-L-methionyl-tRNA(fMet) + (6S)-5,6,7,8-tetrahydrofolate + H(+). Its function is as follows. Attaches a formyl group to the free amino group of methionyl-tRNA(fMet). The formyl group appears to play a dual role in the initiator identity of N-formylmethionyl-tRNA by promoting its recognition by IF2 and preventing the misappropriation of this tRNA by the elongation apparatus. This chain is Methionyl-tRNA formyltransferase, found in Caulobacter sp. (strain K31).